We begin with the raw amino-acid sequence, 398 residues long: Formate-dependent phosphoribosylglycinamide formyltransferase (398 aa).

N(1)-(5-phospho-beta-D-ribosyl)glycinamide is bound by residues 21–22 (EL) and glutamate 81. ATP-binding positions include arginine 113, lysine 154, 194-197 (EEYV), and glutamate 202. The ATP-grasp domain maps to 118-314 (RFAAEKVKVP…EFQVHVRSAL (197 aa)). 2 residues coordinate Mg(2+): glutamate 273 and glutamate 285. N(1)-(5-phospho-beta-D-ribosyl)glycinamide-binding positions include aspartate 292, lysine 362, and 369–370 (RR).

It belongs to the PurK/PurT family. In terms of assembly, homodimer.

It catalyses the reaction N(1)-(5-phospho-beta-D-ribosyl)glycinamide + formate + ATP = N(2)-formyl-N(1)-(5-phospho-beta-D-ribosyl)glycinamide + ADP + phosphate + H(+). It participates in purine metabolism; IMP biosynthesis via de novo pathway; N(2)-formyl-N(1)-(5-phospho-D-ribosyl)glycinamide from N(1)-(5-phospho-D-ribosyl)glycinamide (formate route): step 1/1. Functionally, involved in the de novo purine biosynthesis. Catalyzes the transfer of formate to 5-phospho-ribosyl-glycinamide (GAR), producing 5-phospho-ribosyl-N-formylglycinamide (FGAR). Formate is provided by PurU via hydrolysis of 10-formyl-tetrahydrofolate. This is Formate-dependent phosphoribosylglycinamide formyltransferase from Sulfolobus acidocaldarius (strain ATCC 33909 / DSM 639 / JCM 8929 / NBRC 15157 / NCIMB 11770).